A 208-amino-acid chain; its full sequence is Uracil phosphoribosyltransferase (208 aa).

5-phospho-alpha-D-ribose 1-diphosphate is bound by residues Arg78, Arg103, and 130 to 138; that span reads DPMLATANS. Uracil-binding positions include Ile193 and 198-200; that span reads GDA. Asp199 is a binding site for 5-phospho-alpha-D-ribose 1-diphosphate.

This sequence belongs to the UPRTase family. Mg(2+) serves as cofactor.

It carries out the reaction UMP + diphosphate = 5-phospho-alpha-D-ribose 1-diphosphate + uracil. It functions in the pathway pyrimidine metabolism; UMP biosynthesis via salvage pathway; UMP from uracil: step 1/1. Its activity is regulated as follows. Allosterically activated by GTP. In terms of biological role, catalyzes the conversion of uracil and 5-phospho-alpha-D-ribose 1-diphosphate (PRPP) to UMP and diphosphate. This chain is Uracil phosphoribosyltransferase, found in Brucella melitensis biotype 2 (strain ATCC 23457).